The sequence spans 70 residues: Small, acid-soluble spore protein alpha (70 aa).

This sequence belongs to the alpha/beta-type SASP family.

SASP are bound to spore DNA. They are double-stranded DNA-binding proteins that cause DNA to change to an a-like conformation. They protect the DNA backbone from chemical and enzymatic cleavage and are thus involved in dormant spore's high resistance to UV light. This Paraclostridium bifermentans (Clostridium bifermentans) protein is Small, acid-soluble spore protein alpha.